Here is a 536-residue protein sequence, read N- to C-terminus: CTP synthase (536 aa).

Positions methionine 1–leucine 267 are amidoligase domain. CTP is bound at residue serine 13. Position 13 (serine 13) interacts with UTP. Serine 14–isoleucine 19 contacts ATP. Tyrosine 54 contributes to the L-glutamine binding site. Aspartate 71 provides a ligand contact to ATP. Residues aspartate 71 and glutamate 141 each contribute to the Mg(2+) site. Residues aspartate 148 to glutamate 150, lysine 188 to glutamine 193, and lysine 224 contribute to the CTP site. Residues lysine 188–glutamine 193 and lysine 224 each bind UTP. Arginine 240–alanine 242 lines the ATP pocket. One can recognise a Glutamine amidotransferase type-1 domain in the interval threonine 293 to serine 535. Residue glycine 355 participates in L-glutamine binding. Cysteine 382 acts as the Nucleophile; for glutamine hydrolysis in catalysis. L-glutamine-binding positions include leucine 383–glutamine 386, glutamate 406, and arginine 463. Catalysis depends on residues histidine 508 and glutamate 510.

This sequence belongs to the CTP synthase family. In terms of assembly, homotetramer.

The enzyme catalyses UTP + L-glutamine + ATP + H2O = CTP + L-glutamate + ADP + phosphate + 2 H(+). The catalysed reaction is L-glutamine + H2O = L-glutamate + NH4(+). It carries out the reaction UTP + NH4(+) + ATP = CTP + ADP + phosphate + 2 H(+). It participates in pyrimidine metabolism; CTP biosynthesis via de novo pathway; CTP from UDP: step 2/2. With respect to regulation, allosterically activated by GTP, when glutamine is the substrate; GTP has no effect on the reaction when ammonia is the substrate. The allosteric effector GTP functions by stabilizing the protein conformation that binds the tetrahedral intermediate(s) formed during glutamine hydrolysis. Inhibited by the product CTP, via allosteric rather than competitive inhibition. In terms of biological role, catalyzes the ATP-dependent amination of UTP to CTP with either L-glutamine or ammonia as the source of nitrogen. Regulates intracellular CTP levels through interactions with the four ribonucleotide triphosphates. In Staphylococcus saprophyticus subsp. saprophyticus (strain ATCC 15305 / DSM 20229 / NCIMB 8711 / NCTC 7292 / S-41), this protein is CTP synthase.